Here is a 179-residue protein sequence, read N- to C-terminus: Dual-action ribosomal maturation protein DarP (179 aa).

This sequence belongs to the DarP family.

Its subcellular location is the cytoplasm. In terms of biological role, member of a network of 50S ribosomal subunit biogenesis factors which assembles along the 30S-50S interface, preventing incorrect 23S rRNA structures from forming. Promotes peptidyl transferase center (PTC) maturation. The chain is Dual-action ribosomal maturation protein DarP from Erwinia tasmaniensis (strain DSM 17950 / CFBP 7177 / CIP 109463 / NCPPB 4357 / Et1/99).